Consider the following 189-residue polypeptide: Elongation factor P (189 aa).

The protein belongs to the elongation factor P family.

Its subcellular location is the cytoplasm. It functions in the pathway protein biosynthesis; polypeptide chain elongation. Its function is as follows. Involved in peptide bond synthesis. Stimulates efficient translation and peptide-bond synthesis on native or reconstituted 70S ribosomes in vitro. Probably functions indirectly by altering the affinity of the ribosome for aminoacyl-tRNA, thus increasing their reactivity as acceptors for peptidyl transferase. This is Elongation factor P from Phytoplasma australiense.